We begin with the raw amino-acid sequence, 253 residues long: tRNA pseudouridine synthase A (253 aa).

Aspartate 53 (nucleophile) is an active-site residue. Tyrosine 111 lines the substrate pocket.

Belongs to the tRNA pseudouridine synthase TruA family. As to quaternary structure, homodimer.

The catalysed reaction is uridine(38/39/40) in tRNA = pseudouridine(38/39/40) in tRNA. Formation of pseudouridine at positions 38, 39 and 40 in the anticodon stem and loop of transfer RNAs. The chain is tRNA pseudouridine synthase A from Chlorobium luteolum (strain DSM 273 / BCRC 81028 / 2530) (Pelodictyon luteolum).